The following is a 306-amino-acid chain: Putative HPr kinase/phosphorylase 2 (306 aa).

Residues histidine 138 and lysine 159 contribute to the active site. Position 153–160 (153–160 (GESGVGKS)) interacts with ATP. Serine 160 serves as a coordination point for Mg(2+). The active-site Proton acceptor; for phosphorylation activity. Proton donor; for dephosphorylation activity is aspartate 177. Residues 201–210 (LALRSVGLLN) form an important for the catalytic mechanism of both phosphorylation and dephosphorylation region. The tract at residues 264–269 (QLQPGR) is important for the catalytic mechanism of dephosphorylation.

It belongs to the HPrK/P family. As to quaternary structure, homohexamer. The cofactor is Mg(2+).

The enzyme catalyses [HPr protein]-L-serine + ATP = [HPr protein]-O-phospho-L-serine + ADP + H(+). It catalyses the reaction [HPr protein]-O-phospho-L-serine + phosphate + H(+) = [HPr protein]-L-serine + diphosphate. Its function is as follows. Catalyzes the ATP- as well as the pyrophosphate-dependent phosphorylation of a specific serine residue in HPr, a phosphocarrier protein of the phosphoenolpyruvate-dependent sugar phosphotransferase system (PTS). HprK/P also catalyzes the pyrophosphate-producing, inorganic phosphate-dependent dephosphorylation (phosphorolysis) of seryl-phosphorylated HPr (P-Ser-HPr). The two antagonistic activities of HprK/P are regulated by several intracellular metabolites, which change their concentration in response to the absence or presence of rapidly metabolisable carbon sources (glucose, fructose, etc.) in the growth medium. Also phosphorylates/dephosphorylates the HPr-like catabolite repression protein crh on a specific serine residue. Therefore, by controlling the phosphorylation state of HPr and crh, HPrK/P is a sensor enzyme that plays a major role in the regulation of carbon metabolism and sugar transport: it mediates carbon catabolite repression (CCR), and regulates PTS-catalyzed carbohydrate uptake and inducer exclusion. The polypeptide is Putative HPr kinase/phosphorylase 2 (hprK2) (Oceanobacillus iheyensis (strain DSM 14371 / CIP 107618 / JCM 11309 / KCTC 3954 / HTE831)).